Consider the following 418-residue polypeptide: Ceramide synthase LAC1 (418 aa).

Residues 1 to 14 (MSTIKPSPSNNNLK) are compositionally biased toward polar residues. Positions 1 to 25 (MSTIKPSPSNNNLKVRSRPRRKSSI) are disordered. Position 2 is an N-acetylserine (S2). Topologically, residues 2–81 (STIKPSPSNN…WFSFREISYR (80 aa)) are cytoplasmic. The span at 15–24 (VRSRPRRKSS) shows a compositional bias: basic residues. Residues S23 and S24 each carry the phosphoserine modification. A helical membrane pass occupies residues 82–102 (HAWIAPLMILIAVYSAYFTSG). N-linked (GlcNAc...) asparagine glycosylation occurs at N103. At 103-130 (NTTKTNVLHRFVAVSYQIGDTNAYGKGI) the chain is on the lumenal side. The helical transmembrane segment at 131–155 (NDLCFVFYYMIFFTFLREFLMDVVI) threads the bilayer. At 156–172 (RPFAIRLHVTSKHRIKR) the chain is on the cytoplasmic side. One can recognise a TLC domain in the interval 168–385 (HRIKRIMEQM…FRVLYRILWR (218 aa)). Fumonisin B1 is bound by residues R169, R172, and Y182. A helical transmembrane segment spans residues 173–194 (IMEQMYAIFYTGVSGPFGIYCM). Topologically, residues 195–217 (YHSDLWFFNTKAMYRTYPDFTNP) are lumenal. Residues 218 to 240 (FLFKVFYLGQAAFWAQQACILVL) form a helical membrane-spanning segment. Hexacosanoate-binding residues include Y224 and W231. W231 contacts fumonisin B1. W231 lines the hexacosanoyl-CoA pocket. Residues 241 to 249 (QLEKPRKDH) lie on the Cytoplasmic side of the membrane. The chain crosses the membrane as a helical span at residues 250 to 268 (NELTFHHIVTLLLIWSSYV). H255 is a binding site for fumonisin B1. Residues H255, T259, L262, I263, S265, S266, F269, F271, M274, G275, I278, Y279, M282, D283, and D286 each coordinate hexacosanoate. Residues H255, T259, and L262 each contribute to the hexacosanoyl-CoA site. Hexacosanoyl-CoA is bound by residues S265 and S266. At 269 to 273 (FHFTK) the chain is on the lumenal side. The hexacosanoyl-CoA site is built by F271, M274, G275, I278, Y279, and M282. The chain crosses the membrane as a helical span at residues 274-295 (MGLPIYITMDVSDFLLSFSKTL). Positions 286, 289, 293, 296, 297, 303, 304, 307, and 314 each coordinate fumonisin B1. Residues D286, L289, K293, and N296 each contribute to the hexacosanoyl-CoA site. The Cytoplasmic segment spans residues 296–305 (NYLDSGLAFF). A helical membrane pass occupies residues 306–334 (SFAIFVVAWIYLRHYINLKILWSVLTQFR). F307 serves as a coordination point for hexacosanoyl-CoA. The hexacosanoate site is built by R318, F343, Y348, I352, S353, I356, V357, L360, I361, and W371. Residue R318 coordinates hexacosanoyl-CoA. The Lumenal segment spans residues 335–353 (TEGNYVLNFATQQYKCWIS). Residues Y348, I352, S353, I356, V357, and L360 each contribute to the hexacosanoyl-CoA site. The helical transmembrane segment at 354-382 (LPIVFVLIGALQLVNLYWLFLIFRVLYRI) threads the bilayer. Residues W371, I375, V378, I382, and R385 each coordinate fumonisin B1. W371 lines the hexacosanoyl-CoA pocket. Over 383 to 418 (LWRGILKDDRSDSESDEESDESSTTPTDSTPTKKDI) the chain is Cytoplasmic. Positions 390-418 (DDRSDSESDEESDESSTTPTDSTPTKKDI) are disordered.

The protein belongs to the sphingosine N-acyltransferase family. Component of the ceramide synthase complex composed of at least LAC1, LAG1 and LIP1. Forms a heterotetrameric complex, where one unit of the LIP1 homodimer interacts with LAC1 and the other with either LAC1 or LAG1. In terms of processing, phosphorylated; phosphorylation is induced upon disruption of sphingolipid synthesis. Phosphorylation is inhibited by exogenous addition of phytosphingosine.

It is found in the endoplasmic reticulum membrane. The catalysed reaction is a very long-chain fatty acyl-CoA + a sphingoid base = an N-(very-long-chain fatty acyl)-sphingoid base + CoA + H(+). It catalyses the reaction hexacosanoyl-CoA + sphinganine = N-hexacosanoylsphinganine + CoA + H(+). The enzyme catalyses eicosanoyl-CoA + sphinganine = N-eicosanoylsphinganine + CoA + H(+). It carries out the reaction a fatty acyl-CoA + sphinganine = an N-acylsphinganine + CoA + H(+). The catalysed reaction is (4R)-hydroxysphinganine + a fatty acyl-CoA = an N-acyl-(4R)-4-hydroxysphinganine + CoA + H(+). It participates in lipid metabolism; sphingolipid metabolism. Its activity is regulated as follows. As part of the ceramide synthase complex, inhibited by the sphinganine analog mycotoxin, fumonisin B1 (FB1). Activated by ACB1, as part of the ceramide synthase complex. Functionally, component of the ceramide synthase complex that catalyzes the transfer of the acyl chain from acyl-CoA to a sphingoid base, with high selectivity toward hexacosanoyl-CoA (C26:0-CoA). N-acylates sphinganine and phytosphingosine bases to form dihydroceramides and phytoceramides, respectively. Redundant with LAG1. Facilitates ER-to-Golgi transport of GPI-anchored proteins. Has a lower affinity for phytosphingosine (PHS) than dihydrosphingosine (DHS); PHS is required for the synthesis of phytoceramides and the formation of nuclear envelopes. Along with LAG1, plays a role in pheromone-induced MAP kinase-activation of mating and formation of diploid cells. May also play a role, together with LAG1, in the polarized membrane distribution of phosphatidylinositol 4,5 biphosphate required for STE5 localization to the plasma membrane. The protein is Ceramide synthase LAC1 (LAC1) of Saccharomyces cerevisiae (strain ATCC 204508 / S288c) (Baker's yeast).